The sequence spans 397 residues: Dual oxidase maturation factor 1 (397 aa).

2 helical membrane passes run 26 to 46 (FVIF…LPGV) and 57 to 77 (YVLM…PCWA). N-linked (GlcNAc...) asparagine glycosylation is present at N109. The next 3 helical transmembrane spans lie at 191–211 (AAIW…LFLP), 218–238 (ILAT…LSPC), and 261–281 (CFYL…GLGI). A disordered region spans residues 324–376 (YGTNTTNSSRDKNDISSDKTAGSSGFQSRTSTCQSSASSASLRSQSSIETVHD). N327 and N330 each carry an N-linked (GlcNAc...) asparagine glycan. Residues 341-350 (DKTAGSSGFQ) show a composition bias toward polar residues. A compositionally biased stretch (low complexity) spans 351-370 (SRTSTCQSSASSASLRSQSS).

It belongs to the DUOXA family. As to quaternary structure, interacts with bli-3 and tsp-15. Interacts with csnk-1. As to expression, expressed in the hypodermis, specifically in seam cells, the terminal bulb of the pharynx, the distal region of the gonadal arm, vulva, spermatheca and uterus.

The protein localises to the membrane. Functionally, plays a role in cuticle biogenesis. In complex with tsp-15 and the dual oxidase bli-3, promotes the generation of reactive oxygen species (ROS) and tyrosine cross-linking of collagen, thus stabilizing cuticular extracellular matrix. This is Dual oxidase maturation factor 1 from Caenorhabditis elegans.